A 514-amino-acid polypeptide reads, in one-letter code: Folylpolyglutamate synthase (514 aa).

ATP is bound at residue 82–85; the sequence is GKGS. Mg(2+)-binding residues include Ser-107, Glu-186, and His-214. ATP is bound by residues Arg-339 and Asp-355.

Belongs to the folylpolyglutamate synthase family. A monovalent cation serves as cofactor.

The protein localises to the mitochondrion inner membrane. It localises to the mitochondrion matrix. The protein resides in the cytoplasm. It catalyses the reaction (6S)-5,6,7,8-tetrahydrofolyl-(gamma-L-Glu)(n) + L-glutamate + ATP = (6S)-5,6,7,8-tetrahydrofolyl-(gamma-L-Glu)(n+1) + ADP + phosphate + H(+). The protein operates within cofactor biosynthesis; tetrahydrofolylpolyglutamate biosynthesis. Functionally, catalyzes conversion of folates to polyglutamate derivatives allowing concentration of folate compounds in the cell and the intracellular retention of these cofactors, which are important substrates for most of the folate-dependent enzymes that are involved in one-carbon transfer reactions involved in purine, pyrimidine and amino acid synthesis. The protein is Folylpolyglutamate synthase (MET7) of Candida albicans (Yeast).